The chain runs to 412 residues: Motilin receptor (412 aa).

The Extracellular segment spans residues 1–35 (MGSPWNGSDGPEGAREPPWPALPPCDERRCSPFPL). The N-linked (GlcNAc...) asparagine glycan is linked to Asn-6. Residues 36 to 56 (GALVPVTAVCLCLFVVGVSGN) form a helical membrane-spanning segment. The Cytoplasmic segment spans residues 57 to 74 (VVTVMLIGRYRDMRTTTN). A helical transmembrane segment spans residues 75–94 (LYLGSMAVSDLLILLGLPFD). Residues 95–112 (LYRLWRSRPWVFGPLLCR) are Extracellular-facing. Cys-111 and Cys-235 are disulfide-bonded. A helical membrane pass occupies residues 113 to 134 (LSLYVGEGCTYATLLHMTALSV). Over 135-157 (ERYLAICRPLRARVLVTRRRVRA) the chain is Cytoplasmic. A helical transmembrane segment spans residues 158-178 (LIAVLWAVALLSAGPFLFLVG). Over 179-246 (VEQDPGISVV…PSPAQLGALR (68 aa)) the chain is Extracellular. Asn-192 is a glycosylation site (N-linked (GlcNAc...) asparagine). The chain crosses the membrane as a helical span at residues 247–270 (VMLWVTTAYFFLPFLCLSILYGLI). At 271 to 298 (GRELWSSRRPLRGPAASGRERGHRQTVR) the chain is on the cytoplasmic side. A helical membrane pass occupies residues 299 to 320 (VLLVVVLAFIICWLPFHVGRII). The Extracellular segment spans residues 321–334 (YINTEDSRMMYFSQ). The helical transmembrane segment at 335–358 (YFNIVALQLFYLSASINPILYNLI) threads the bilayer. Topologically, residues 359–412 (SKKYRAAAFKLLLARKSRPRGFHRSRDTAGEVAGDTGGDTVGYTETSANVKTMG) are cytoplasmic.

It belongs to the G-protein coupled receptor 1 family. As to expression, expressed only in thyroid, stomach, and bone marrow.

It is found in the cell membrane. Receptor for motilin. This Homo sapiens (Human) protein is Motilin receptor (MLNR).